Reading from the N-terminus, the 172-residue chain is Ribosome maturation factor RimM (172 aa).

Positions 96–168 constitute a PRC barrel domain; the sequence is DGEFYYHEII…RVQVELMEGL (73 aa).

Belongs to the RimM family. Binds ribosomal protein uS19.

It is found in the cytoplasm. Functionally, an accessory protein needed during the final step in the assembly of 30S ribosomal subunit, possibly for assembly of the head region. Essential for efficient processing of 16S rRNA. May be needed both before and after RbfA during the maturation of 16S rRNA. It has affinity for free ribosomal 30S subunits but not for 70S ribosomes. The polypeptide is Ribosome maturation factor RimM (Streptococcus agalactiae serotype III (strain NEM316)).